Here is a 183-residue protein sequence, read N- to C-terminus: Large ribosomal subunit protein eL18 (183 aa).

The tract at residues 150–183 (RHFGPAPGAPRSHTKPYVRTKGHERARPRRRSNV) is disordered. Residues 161-183 (SHTKPYVRTKGHERARPRRRSNV) are compositionally biased toward basic residues.

The protein belongs to the eukaryotic ribosomal protein eL18 family.

Its subcellular location is the cytoplasm. The chain is Large ribosomal subunit protein eL18 (RpL18) from Spodoptera frugiperda (Fall armyworm).